Reading from the N-terminus, the 184-residue chain is Cytidylate kinase (184 aa).

An ATP-binding site is contributed by 8–16; the sequence is GQPGSGKTT.

This sequence belongs to the cytidylate kinase family. Type 2 subfamily.

It is found in the cytoplasm. It carries out the reaction CMP + ATP = CDP + ADP. The catalysed reaction is dCMP + ATP = dCDP + ADP. This Pyrobaculum calidifontis (strain DSM 21063 / JCM 11548 / VA1) protein is Cytidylate kinase.